We begin with the raw amino-acid sequence, 430 residues long: mRNA cap guanine-N(7) methyltransferase (430 aa).

Positions 1–88 (MALRPEKPVW…YDLEERKKKQ (88 aa)) are disordered. Basic and acidic residues predominate over residues 15 to 37 (QYDRQYGKLEEPKPPREESKPGD). The mRNA cap 0 methyltransferase domain maps to 136 to 419 (SPIIKLRNFN…FYTVFAFRKV (284 aa)). 145–146 (NN) is a binding site for mRNA. Positions 149, 167, 189, 218, 244, and 249 each coordinate S-adenosyl-L-methionine.

It belongs to the class I-like SAM-binding methyltransferase superfamily. mRNA cap 0 methyltransferase family.

Its subcellular location is the nucleus. It catalyses the reaction a 5'-end (5'-triphosphoguanosine)-ribonucleoside in mRNA + S-adenosyl-L-methionine = a 5'-end (N(7)-methyl 5'-triphosphoguanosine)-ribonucleoside in mRNA + S-adenosyl-L-homocysteine. Its function is as follows. Responsible for methylating the 5'-cap structure of mRNAs. This is mRNA cap guanine-N(7) methyltransferase (ABD1) from Eremothecium gossypii (strain ATCC 10895 / CBS 109.51 / FGSC 9923 / NRRL Y-1056) (Yeast).